Reading from the N-terminus, the 88-residue chain is Small ribosomal subunit protein uS15 (88 aa).

It belongs to the universal ribosomal protein uS15 family. In terms of assembly, part of the 30S ribosomal subunit. Forms a bridge to the 50S subunit in the 70S ribosome, contacting the 23S rRNA.

Its function is as follows. One of the primary rRNA binding proteins, it binds directly to 16S rRNA where it helps nucleate assembly of the platform of the 30S subunit by binding and bridging several RNA helices of the 16S rRNA. Forms an intersubunit bridge (bridge B4) with the 23S rRNA of the 50S subunit in the ribosome. The polypeptide is Small ribosomal subunit protein uS15 (Geobacter sulfurreducens (strain ATCC 51573 / DSM 12127 / PCA)).